Here is a 102-residue protein sequence, read N- to C-terminus: Small ribosomal subunit protein uS10 (102 aa).

The protein belongs to the universal ribosomal protein uS10 family. As to quaternary structure, part of the 30S ribosomal subunit.

Involved in the binding of tRNA to the ribosomes. This Moorella thermoacetica (strain ATCC 39073 / JCM 9320) protein is Small ribosomal subunit protein uS10.